Reading from the N-terminus, the 265-residue chain is F-box only protein 6 (265 aa).

The F-box domain maps to 3 to 50; the sequence is LVSINQLPENILLEVFMHVPARQLLRNCRPVCCLWRDLIDLVSLWKRK. One can recognise an FBA domain in the interval 71 to 252; it reads FYFLCSLRRN…VTNSSVVISH (182 aa). Serine 251 carries the post-translational modification Phosphoserine.

Part of a SCF (SKP1-cullin-F-box) protein ligase complex. Interacts with VCP, CHEK1 and CUL1.

The protein resides in the cytoplasm. It participates in protein modification; protein ubiquitination. Substrate-recognition component of some SCF (SKP1-CUL1-F-box protein)-type E3 ubiquitin ligase complexes. Involved in endoplasmic reticulum-associated degradation pathway (ERAD) for misfolded lumenal proteins by recognizing and binding sugar chains on unfolded glycoproteins that are retrotranslocated into the cytosol and promoting their ubiquitination and subsequent degradation. Able to recognize and bind denatured glycoproteins, which are modified with not only high-mannose but also complex-type oligosaccharides. Also recognizes sulfated glycans. Also involved in DNA damage response by specifically recognizing activated CHEK1 (phosphorylated on 'Ser-345'), promoting its ubiquitination and degradation. Ubiquitination of CHEK1 is required to ensure that activated CHEK1 does not accumulate as cells progress through S phase, or when replication forks encounter transient impediments during normal DNA replication. This is F-box only protein 6 (FBXO6) from Bos taurus (Bovine).